We begin with the raw amino-acid sequence, 172 residues long: RNA pyrophosphohydrolase (172 aa).

In terms of domain architecture, Nudix hydrolase spans 8 to 153 (QHRPNVGVVL…KRGVYEAVVA (146 aa)). The Nudix box signature appears at 43–64 (GGVDEGEDLEVAARRELAEETG).

It belongs to the Nudix hydrolase family. RppH subfamily. A divalent metal cation is required as a cofactor.

Accelerates the degradation of transcripts by removing pyrophosphate from the 5'-end of triphosphorylated RNA, leading to a more labile monophosphorylated state that can stimulate subsequent ribonuclease cleavage. The polypeptide is RNA pyrophosphohydrolase (Caulobacter vibrioides (strain ATCC 19089 / CIP 103742 / CB 15) (Caulobacter crescentus)).